Consider the following 105-residue polypeptide: Cortistatin (105 aa).

The signal sequence occupies residues 1-18 (MPLSPGLLLLLLSGATAT). Positions 19–74 (AALPLEGGPTGRDSEHMQEAAGIRKSSLLTFLAWWFEWTSQASAGPLIGEEAREVA) are excised as a propeptide. Residues cysteine 93 and cysteine 104 are joined by a disulfide bond.

Belongs to the somatostatin family. As to expression, expressed in a subset of GABAergic cells in the cortex and hippocampus.

It is found in the secreted. Functionally, binds to all human somatostatin receptor (SSTR) subtypes. It also inhibits cAMP production induced by forskolin through SSTRs. The polypeptide is Cortistatin (CORT) (Homo sapiens (Human)).